We begin with the raw amino-acid sequence, 130 residues long: Ribosome-binding factor A (130 aa).

Belongs to the RbfA family. As to quaternary structure, monomer. Binds 30S ribosomal subunits, but not 50S ribosomal subunits or 70S ribosomes.

The protein localises to the cytoplasm. Functionally, one of several proteins that assist in the late maturation steps of the functional core of the 30S ribosomal subunit. Associates with free 30S ribosomal subunits (but not with 30S subunits that are part of 70S ribosomes or polysomes). Required for efficient processing of 16S rRNA. May interact with the 5'-terminal helix region of 16S rRNA. This chain is Ribosome-binding factor A, found in Prochlorococcus marinus (strain MIT 9301).